Here is a 231-residue protein sequence, read N- to C-terminus: MTIEKKFVADGVRKVRVEQYLNKELKRAGYGGMDIVRTPVGTQVTIFAEKPGIVIGKGGKLVRQLTTDLSTVYGIESPQVEVQQVANPNLNAQIMAERLANALERGWYFRKAGTSVIRRVMDSGALGCEVIIAGKLTGARARVQKFVEGYIKHSGEPSESIVEKGYATAIKKLGIIGVQVKIVPPGAKLPDQFEIRADAAPAPARVVETDIFEEFDAELAAEPEPEFVEEV.

Residues 17 to 86 (VEQYLNKELK…SPQVEVQQVA (70 aa)) enclose the KH type-2 domain.

Belongs to the universal ribosomal protein uS3 family. As to quaternary structure, part of the 30S ribosomal subunit.

Its function is as follows. Binds the lower part of the 30S subunit head. The sequence is that of Small ribosomal subunit protein uS3 from Methanocorpusculum labreanum (strain ATCC 43576 / DSM 4855 / Z).